We begin with the raw amino-acid sequence, 115 residues long: T cell receptor beta variable 7-7 (115 aa).

A signal peptide spans 1 to 21; it reads MGTSLLCWVVLGFLGTDHTGA. An Ig-like domain is found at 22-115; the sequence is GVSQSPRYKV…SAMYRCASSL (94 aa). Cysteine 42 and cysteine 111 are joined by a disulfide.

As to quaternary structure, alpha-beta TR is a heterodimer composed of an alpha and beta chain; disulfide-linked. The alpha-beta TR is associated with the transmembrane signaling CD3 coreceptor proteins to form the TR-CD3 (TcR or TCR). The assembly of alpha-beta TR heterodimers with CD3 occurs in the endoplasmic reticulum where a single alpha-beta TR heterodimer associates with one CD3D-CD3E heterodimer, one CD3G-CD3E heterodimer and one CD247 homodimer forming a stable octameric structure. CD3D-CD3E and CD3G-CD3E heterodimers preferentially associate with TR alpha and TR beta chains, respectively. The association of the CD247 homodimer is the last step of TcR assembly in the endoplasmic reticulum and is required for transport to the cell surface.

The protein localises to the cell membrane. V region of the variable domain of T cell receptor (TR) beta chain that participates in the antigen recognition. Alpha-beta T cell receptors are antigen specific receptors which are essential to the immune response and are present on the cell surface of T lymphocytes. Recognize peptide-major histocompatibility (MH) (pMH) complexes that are displayed by antigen presenting cells (APC), a prerequisite for efficient T cell adaptive immunity against pathogens. Binding of alpha-beta TR to pMH complex initiates TR-CD3 clustering on the cell surface and intracellular activation of LCK that phosphorylates the ITAM motifs of CD3G, CD3D, CD3E and CD247 enabling the recruitment of ZAP70. In turn ZAP70 phosphorylates LAT, which recruits numerous signaling molecules to form the LAT signalosome. The LAT signalosome propagates signal branching to three major signaling pathways, the calcium, the mitogen-activated protein kinase (MAPK) kinase and the nuclear factor NF-kappa-B (NF-kB) pathways, leading to the mobilization of transcription factors that are critical for gene expression and essential for T cell growth and differentiation. The T cell repertoire is generated in the thymus, by V-(D)-J rearrangement. This repertoire is then shaped by intrathymic selection events to generate a peripheral T cell pool of self-MH restricted, non-autoaggressive T cells. Post-thymic interaction of alpha-beta TR with the pMH complexes shapes TR structural and functional avidity. This is T cell receptor beta variable 7-7 from Homo sapiens (Human).